The sequence spans 104 residues: Flagellar hook-basal body complex protein FliE (104 aa).

It belongs to the FliE family.

It is found in the bacterial flagellum basal body. The sequence is that of Flagellar hook-basal body complex protein FliE from Pectobacterium carotovorum subsp. carotovorum (strain PC1).